Here is a 396-residue protein sequence, read N- to C-terminus: Beta-1,4-galactosyltransferase 3 (396 aa).

Topologically, residues M1–C10 are cytoplasmic. A helical; Signal-anchor for type II membrane protein transmembrane segment spans residues T11 to F31. At R32–H396 the chain is on the lumenal side. The N-linked (GlcNAc...) asparagine glycan is linked to N57. C80 and C122 form a disulfide bridge. P133–R137 provides a ligand contact to UDP-alpha-D-galactose. N169 carries N-linked (GlcNAc...) asparagine glycosylation. UDP-alpha-D-galactose is bound by residues F172–R174, V199–D200, Y229, and W261. A disulfide bridge connects residues C193 and C212. Residue D200 participates in Mn(2+) binding. Position 263–266 (G263–D266) interacts with N-acetyl-D-glucosamine. Residue H294 participates in Mn(2+) binding. H294 to G296 is a binding site for UDP-alpha-D-galactose. An N-acetyl-D-glucosamine-binding site is contributed by R306. N340 carries an N-linked (GlcNAc...) asparagine glycan. The segment at I341 to H396 is disordered. The span at R353–F368 shows a compositional bias: polar residues. N388 carries an N-linked (GlcNAc...) asparagine glycan.

Belongs to the glycosyltransferase 7 family. The cofactor is Mn(2+).

It is found in the golgi apparatus. It localises to the golgi stack membrane. The catalysed reaction is an N-acetyl-beta-D-glucosaminyl derivative + UDP-alpha-D-galactose = a beta-D-galactosyl-(1-&gt;4)-N-acetyl-beta-D-glucosaminyl derivative + UDP + H(+). It catalyses the reaction N-acetyl-D-glucosamine + UDP-alpha-D-galactose = beta-D-galactosyl-(1-&gt;4)-N-acetyl-D-glucosamine + UDP + H(+). The enzyme catalyses a beta-D-GlcNAc-(1-&gt;3)-beta-D-Gal-(1-&gt;4)-beta-D-Glc-(1&lt;-&gt;1)-Cer(d18:1(4E)) + UDP-alpha-D-galactose = a neolactoside nLc4Cer(d18:1(4E)) + UDP + H(+). It carries out the reaction a beta-D-glucosylceramide + UDP-alpha-D-galactose = a beta-D-galactosyl-(1-&gt;4)-beta-D-glucosyl-(1&lt;-&gt;1)-ceramide + UDP + H(+). The catalysed reaction is a neolactoside IV(3)-beta-GlcNAc-nLc4Cer + UDP-alpha-D-galactose = a neolactoside nLc6Cer + UDP + H(+). It participates in protein modification; protein glycosylation. Its function is as follows. Responsible for the synthesis of complex-type N-linked oligosaccharides in many glycoproteins as well as the carbohydrate moieties of glycolipids. The protein is Beta-1,4-galactosyltransferase 3 (B4GALT3) of Bos taurus (Bovine).